A 542-amino-acid polypeptide reads, in one-letter code: POTE ankyrin domain family member C (542 aa).

7 ANK repeats span residues 138–171, 172–201, 205–234, 238–267, 271–300, 304–333, and 337–373; these read EDLDKLHRAAWWGKVPRKDLIVMLRDTDMNKRDK, QKRTALHLASANGNSEVVQLLLDRRCQLNV, KKRTALIKAVQCQEDECVLMLLEHGADQNI, YGNTTLHYAVHNEDKLMAKALLLYGADIES, CGLTPLLLGVHEQKQQVVKFLIKKKANLNA, YGRTALILAVCCGSASIVNLLLEQNVDVSS, and SGQTAREYAVSSHHHVICELLSDYKEKQMLKISSENS. The interval 369 to 494 is disordered; that stretch reads SSENSNPEQD…NTGISQDEIL (126 aa). Basic and acidic residues-rich tracts occupy residues 377-392, 401-412, and 466-481; these read QDLKLTSEEESQRLKV, MSQEPEINKDCD, and EEYHSDEQNDTRKQLS. Over residues 482-494 the composition is skewed to polar residues; sequence EEQNTGISQDEIL. The stretch at 489–538 forms a coiled coil; that stretch reads SQDEILTNKQKQIEVAEKKMNSELSLSHKKEEDLLRENSMLQEEIAMLIS.

This sequence belongs to the POTE family. Expressed in prostate and testis.

This Homo sapiens (Human) protein is POTE ankyrin domain family member C (POTEC).